The sequence spans 572 residues: Urease subunit alpha (572 aa).

The Urease domain maps to G136–F572. Ni(2+) contacts are provided by H141, H143, and K224. An N6-carboxylysine modification is found at K224. H226 is a binding site for substrate. Ni(2+)-binding residues include H253 and H279. H327 functions as the Proton donor in the catalytic mechanism. D367 is a binding site for Ni(2+).

The protein belongs to the metallo-dependent hydrolases superfamily. Urease alpha subunit family. Heterotrimer of UreA (gamma), UreB (beta) and UreC (alpha) subunits. Three heterotrimers associate to form the active enzyme. It depends on Ni cation as a cofactor. In terms of processing, carboxylation allows a single lysine to coordinate two nickel ions.

The protein resides in the cytoplasm. The catalysed reaction is urea + 2 H2O + H(+) = hydrogencarbonate + 2 NH4(+). The protein operates within nitrogen metabolism; urea degradation; CO(2) and NH(3) from urea (urease route): step 1/1. The sequence is that of Urease subunit alpha from Actinobacillus pleuropneumoniae serotype 5b (strain L20).